A 264-amino-acid chain; its full sequence is Thymidylate synthase (264 aa).

Residue Arg21 participates in dUMP binding. His51 is a (6R)-5,10-methylene-5,6,7,8-tetrahydrofolate binding site. 126-127 (RR) contacts dUMP. Cys146 (nucleophile) is an active-site residue. Residues 166–169 (RSCD), Asn177, and 207–209 (HLY) contribute to the dUMP site. Residue Asp169 participates in (6R)-5,10-methylene-5,6,7,8-tetrahydrofolate binding. Ala263 lines the (6R)-5,10-methylene-5,6,7,8-tetrahydrofolate pocket.

It belongs to the thymidylate synthase family. Bacterial-type ThyA subfamily. As to quaternary structure, homodimer.

Its subcellular location is the cytoplasm. The enzyme catalyses dUMP + (6R)-5,10-methylene-5,6,7,8-tetrahydrofolate = 7,8-dihydrofolate + dTMP. It participates in pyrimidine metabolism; dTTP biosynthesis. Functionally, catalyzes the reductive methylation of 2'-deoxyuridine-5'-monophosphate (dUMP) to 2'-deoxythymidine-5'-monophosphate (dTMP) while utilizing 5,10-methylenetetrahydrofolate (mTHF) as the methyl donor and reductant in the reaction, yielding dihydrofolate (DHF) as a by-product. This enzymatic reaction provides an intracellular de novo source of dTMP, an essential precursor for DNA biosynthesis. This Salmonella arizonae (strain ATCC BAA-731 / CDC346-86 / RSK2980) protein is Thymidylate synthase.